The following is a 239-amino-acid chain: MNPVRTLSATKAAFFSAYPRPINAVYRRVVEELLVELHLTTVNSTFVYDPFFALGLVTLYDGLMEAYHPPEQREAIFNALCKALHLKPEVLRKNARDLLELMGSGDPRQRLDLLCLKPEAEDVGGLKAILERMTQPPYAYSRVLAVGLYTAYEVVAKSLYEEPEERTRRFLENVVSKLPFSTERVRKDLELYRSSLDRMKQARAVVEEMVKAARRQQERRQSAASLPETSLGDPSKPGS.

Residues 183-221 (ERVRKDLELYRSSLDRMKQARAVVEEMVKAARRQQERRQ) adopt a coiled-coil conformation. A compositionally biased stretch (basic and acidic residues) spans 211–221 (KAARRQQERRQ). Positions 211–239 (KAARRQQERRQSAASLPETSLGDPSKPGS) are disordered.

Belongs to the THF1 family.

In terms of biological role, may be involved in photosynthetic membrane biogenesis. In Synechococcus sp. (strain JA-2-3B'a(2-13)) (Cyanobacteria bacterium Yellowstone B-Prime), this protein is Protein Thf1.